The primary structure comprises 211 residues: Small ribosomal subunit protein uS3 (211 aa).

The KH type-2 domain occupies 39 to 107 (VTKYVESSFA…VPSLNVVEVK (69 aa)).

Belongs to the universal ribosomal protein uS3 family. As to quaternary structure, part of the 30S ribosomal subunit. Forms a tight complex with proteins S10 and S14.

Binds the lower part of the 30S subunit head. Binds mRNA in the 70S ribosome, positioning it for translation. This is Small ribosomal subunit protein uS3 from Neorickettsia sennetsu (strain ATCC VR-367 / Miyayama) (Ehrlichia sennetsu).